The following is a 294-amino-acid chain: Retinoic acid receptor responder protein 1 (294 aa).

Residues 1 to 20 (MQPRRQRLPAPWSGPRGPRP) are Lumenal-facing. A helical; Signal-anchor for type III membrane protein transmembrane segment spans residues 21 to 42 (TAPLLALLLLLAPVAAPAGSGD). Cystatin LXN-type domains lie at 38 to 153 (AGSG…EKKK) and 173 to 276 (EIVS…TPEE). S40 carries O-linked (Xyl...) (chondroitin sulfate) serine glycosylation. Residues 43–294 (PDDPGQPQDA…AVVPTELSNF (252 aa)) lie on the Cytoplasmic side of the membrane. A disordered region spans residues 273–294 (TPEEASGTEEGSAVVPTELSNF).

This sequence belongs to the protease inhibitor I47 (latexin) family. In terms of assembly, interacts with AGBL2, KIF11 and MAPRE1. Not N-glycosylated. O-glycosylated; contains chondroitin sulfate. In terms of tissue distribution, detected in urine (at protein level).

It is found in the membrane. The protein resides in the secreted. In terms of biological role, inhibitor of the cytoplasmic carboxypeptidase AGBL2, may regulate the alpha-tubulin tyrosination cycle. The chain is Retinoic acid receptor responder protein 1 (RARRES1) from Homo sapiens (Human).